A 744-amino-acid polypeptide reads, in one-letter code: 1,4-alpha-glucan branching enzyme GlgB (744 aa).

The active-site Nucleophile is the D415. The active-site Proton donor is E468.

This sequence belongs to the glycosyl hydrolase 13 family. GlgB subfamily. In terms of assembly, monomer.

It catalyses the reaction Transfers a segment of a (1-&gt;4)-alpha-D-glucan chain to a primary hydroxy group in a similar glucan chain.. Its pathway is glycan biosynthesis; glycogen biosynthesis. In terms of biological role, catalyzes the formation of the alpha-1,6-glucosidic linkages in glycogen by scission of a 1,4-alpha-linked oligosaccharide from growing alpha-1,4-glucan chains and the subsequent attachment of the oligosaccharide to the alpha-1,6 position. The polypeptide is 1,4-alpha-glucan branching enzyme GlgB (Shewanella frigidimarina (strain NCIMB 400)).